Consider the following 427-residue polypeptide: Acetylornithine aminotransferase, mitochondrial (427 aa).

Position 279 is an N6-(pyridoxal phosphate)lysine (K279).

The protein belongs to the class-III pyridoxal-phosphate-dependent aminotransferase family. The cofactor is pyridoxal 5'-phosphate.

It is found in the mitochondrion matrix. The enzyme catalyses N(2)-acetyl-L-ornithine + 2-oxoglutarate = N-acetyl-L-glutamate 5-semialdehyde + L-glutamate. It participates in amino-acid biosynthesis; L-arginine biosynthesis; N(2)-acetyl-L-ornithine from L-glutamate: step 4/4. This is Acetylornithine aminotransferase, mitochondrial (ARG8) from Candida glabrata (strain ATCC 2001 / BCRC 20586 / JCM 3761 / NBRC 0622 / NRRL Y-65 / CBS 138) (Yeast).